A 462-amino-acid chain; its full sequence is L-seryl-tRNA(Sec) selenium transferase (462 aa).

Lys-292 bears the N6-(pyridoxal phosphate)lysine mark.

It belongs to the SelA family. Pyridoxal 5'-phosphate is required as a cofactor.

It is found in the cytoplasm. The catalysed reaction is L-seryl-tRNA(Sec) + selenophosphate + H(+) = L-selenocysteinyl-tRNA(Sec) + phosphate. Its pathway is aminoacyl-tRNA biosynthesis; selenocysteinyl-tRNA(Sec) biosynthesis; selenocysteinyl-tRNA(Sec) from L-seryl-tRNA(Sec) (bacterial route): step 1/1. In terms of biological role, converts seryl-tRNA(Sec) to selenocysteinyl-tRNA(Sec) required for selenoprotein biosynthesis. The chain is L-seryl-tRNA(Sec) selenium transferase from Geotalea uraniireducens (strain Rf4) (Geobacter uraniireducens).